We begin with the raw amino-acid sequence, 89 residues long: Large ribosomal subunit protein uL23cz/uL23cy (89 aa).

This sequence belongs to the universal ribosomal protein uL23 family. As to quaternary structure, part of the 50S ribosomal subunit.

Its subcellular location is the plastid. It localises to the chloroplast. In terms of biological role, binds to 23S rRNA. This Pelargonium hortorum (Common geranium) protein is Large ribosomal subunit protein uL23cz/uL23cy (rpl23-A).